The primary structure comprises 549 residues: Coiled-coil domain-containing protein 102A (549 aa).

3 disordered regions span residues 1 to 61 (MSHG…TAPA), 135 to 195 (LAGA…GSQE), and 207 to 248 (PEEP…EEDA). Phosphoserine is present on residues serine 12, serine 26, and serine 28. Positions 37-55 (SLPPTPPSGTPSPGPPPSL) are enriched in pro residues. Residues 69–160 (ESREELRLRE…ARGRELARLR (92 aa)) adopt a coiled-coil conformation. 2 stretches are compositionally biased toward basic and acidic residues: residues 135 to 158 (LAGARRERQEAQGECEARGRELAR) and 165 to 187 (AADKTHDGPEPEREQEPVRDIGA). Coiled coils occupy residues 263-398 (KVLL…NASA) and 426-517 (KLKK…NAPL). Disordered regions lie at residues 472–496 (ELDEAHNQARKLQRSLDEQTEQSEN) and 509–549 (RRQQ…IQVA). A compositionally biased stretch (acidic residues) spans 530 to 549 (EAGDGASDLDEDEDLQIQVA). Serine 536 bears the Phosphoserine mark.

This is Coiled-coil domain-containing protein 102A (Ccdc102a) from Mus musculus (Mouse).